The chain runs to 604 residues: Protein TAX4 (604 aa).

Disordered stretches follow at residues 38–77 (HPNG…PRSI), 133–249 (FSNR…RQQE), 267–300 (GTLP…QENL), 338–380 (DETF…KGLK), and 394–428 (PFPH…NEDK). Over residues 176 to 185 (YDNNVRSRSI) the composition is skewed to polar residues. Low complexity-rich tracts occupy residues 186 to 203 (SPQV…SISS) and 224 to 240 (SMSS…KASL). Composition is skewed to basic residues over residues 276-290 (SQRK…HKLL), 366-379 (KKKK…KKGL), and 396-421 (PHHH…HTSS). The 91-residue stretch at 469–559 (ANEDDESHLQ…RVWNSVDGYV (91 aa)) folds into the EH domain.

It belongs to the IRS4 family. In terms of assembly, interacts with INP51.

Functionally, with IRS4, acts as a positive regulator of INP51 activity and phosphatidylinositol 4,5-bisphosphate turnover. Negatively regulates signaling through the cell integrity pathway, including the MAP kinase SLT2. This Saccharomyces cerevisiae (strain YJM789) (Baker's yeast) protein is Protein TAX4 (TAX4).